Here is a 366-residue protein sequence, read N- to C-terminus: Protein RecA (366 aa).

Position 77–84 (Gly-77–Thr-84) interacts with ATP. Residues Ile-346–Ala-366 are disordered.

This sequence belongs to the RecA family.

The protein localises to the cytoplasm. Can catalyze the hydrolysis of ATP in the presence of single-stranded DNA, the ATP-dependent uptake of single-stranded DNA by duplex DNA, and the ATP-dependent hybridization of homologous single-stranded DNAs. It interacts with LexA causing its activation and leading to its autocatalytic cleavage. This is Protein RecA from Rhodospirillum rubrum (strain ATCC 11170 / ATH 1.1.1 / DSM 467 / LMG 4362 / NCIMB 8255 / S1).